A 239-amino-acid polypeptide reads, in one-letter code: Orotidine 5'-phosphate decarboxylase (239 aa).

Residues Asp-10, Lys-32, 59–68, Thr-122, Arg-184, Gln-193, Gly-213, and Arg-214 each bind substrate; that span reads DLKLHDIPNT. Residue Lys-61 is the Proton donor of the active site.

Belongs to the OMP decarboxylase family. Type 1 subfamily. Homodimer.

The catalysed reaction is orotidine 5'-phosphate + H(+) = UMP + CO2. It participates in pyrimidine metabolism; UMP biosynthesis via de novo pathway; UMP from orotate: step 2/2. In terms of biological role, catalyzes the decarboxylation of orotidine 5'-monophosphate (OMP) to uridine 5'-monophosphate (UMP). In Geobacillus sp. (strain WCH70), this protein is Orotidine 5'-phosphate decarboxylase.